The sequence spans 269 residues: uncharacterized protein (269 aa).

The region spanning 14 to 89 (FEYEIQVNRP…KLREPRLRDR (76 aa)) is the ACT domain.

This is an uncharacterized protein from Bacillus subtilis (strain 168).